A 659-amino-acid chain; its full sequence is Probable acyl-coenzyme A oxidase acox-1.5 (659 aa).

FAD is bound by residues 148–151 (YAQT), 156–157 (GT), and Gly-190. Substrate contacts are provided by residues 284-287 (KVGY) and Arg-294. FAD-binding positions include Arg-319 and 339-342 (QQYR). ATP is bound by residues His-395 and Gln-403. Gly-410 is a binding site for FAD. Residue 432–433 (YE) coordinates substrate. The active-site Proton acceptor is Glu-433. Residue Glu-435 participates in FAD binding. An ATP-binding site is contributed by 524 to 527 (KAAR). A Microbody targeting signal motif is present at residues 657–659 (SKL).

The protein belongs to the acyl-CoA oxidase family. As to quaternary structure, homodimer. FAD serves as cofactor.

Its subcellular location is the peroxisome. The protein operates within lipid metabolism; peroxisomal fatty acid beta-oxidation. Its activity is regulated as follows. Activated by ATP. ATP binding leads to a conformational change that promotes FAD cofactor binding and enzyme activity. ATP binding likely occurs during acox-1.5 folding and/or dimer formation. Functionally, involved in the first step of peroxisomal beta-oxidation by catalyzing the desaturation of fatty acid-derived side chains. In Caenorhabditis elegans, this protein is Probable acyl-coenzyme A oxidase acox-1.5.